We begin with the raw amino-acid sequence, 364 residues long: GTPase Obg (364 aa).

The Obg domain occupies 1 to 159 (MKFVDEAYID…KSLKLELKVL (159 aa)). In terms of domain architecture, OBG-type G spans 160 to 334 (ADVGLLGMPN…LVKTIYQHVK (175 aa)). GTP-binding positions include 166 to 173 (GMPNAGKS), 191 to 195 (FTTLH), 213 to 216 (DLPG), 284 to 287 (NKLD), and 315 to 317 (SAL). Ser-173 and Thr-193 together coordinate Mg(2+). The tract at residues 337–364 (QKSEQPEEEVDPRFIELPPEPAKPASSD) is disordered.

Belongs to the TRAFAC class OBG-HflX-like GTPase superfamily. OBG GTPase family. In terms of assembly, monomer. The cofactor is Mg(2+).

Its subcellular location is the cytoplasm. Functionally, an essential GTPase which binds GTP, GDP and possibly (p)ppGpp with moderate affinity, with high nucleotide exchange rates and a fairly low GTP hydrolysis rate. Plays a role in control of the cell cycle, stress response, ribosome biogenesis and in those bacteria that undergo differentiation, in morphogenesis control. The chain is GTPase Obg from Polaromonas naphthalenivorans (strain CJ2).